The following is a 704-amino-acid chain: Polyribonucleotide nucleotidyltransferase (704 aa).

Residues aspartate 485 and aspartate 491 each coordinate Mg(2+). In terms of domain architecture, KH spans 552–611 (PRIYTMKIDPKKIKDVIGKGGATIRALTEETGTSIDIDDDGTVKIAAVDGNAVKTVMARI). Residues 621–689 (GAVYTGKVTR…RQGRIRLTMR (69 aa)) form the S1 motif domain.

This sequence belongs to the polyribonucleotide nucleotidyltransferase family. As to quaternary structure, component of the RNA degradosome, which is a multiprotein complex involved in RNA processing and mRNA degradation. Requires Mg(2+) as cofactor.

Its subcellular location is the cytoplasm. The enzyme catalyses RNA(n+1) + phosphate = RNA(n) + a ribonucleoside 5'-diphosphate. Functionally, involved in mRNA degradation. Catalyzes the phosphorolysis of single-stranded polyribonucleotides processively in the 3'- to 5'-direction. This is Polyribonucleotide nucleotidyltransferase from Mannheimia succiniciproducens (strain KCTC 0769BP / MBEL55E).